The sequence spans 406 residues: Cysteine desulfurase (406 aa).

Residue K226 is modified to N6-(pyridoxal phosphate)lysine. Residue C364 is the Cysteine persulfide intermediate of the active site.

It belongs to the class-V pyridoxal-phosphate-dependent aminotransferase family. Csd subfamily. In terms of assembly, homodimer. Interacts with SufE and the SufBCD complex composed of SufB, SufC and SufD. The interaction with SufE is required to mediate the direct transfer of the sulfur atom from the S-sulfanylcysteine. It depends on pyridoxal 5'-phosphate as a cofactor.

Its subcellular location is the cytoplasm. It carries out the reaction (sulfur carrier)-H + L-cysteine = (sulfur carrier)-SH + L-alanine. The enzyme catalyses L-selenocysteine + AH2 = hydrogenselenide + L-alanine + A + H(+). It participates in cofactor biosynthesis; iron-sulfur cluster biosynthesis. Cysteine desulfurases mobilize the sulfur from L-cysteine to yield L-alanine, an essential step in sulfur metabolism for biosynthesis of a variety of sulfur-containing biomolecules. Component of the suf operon, which is activated and required under specific conditions such as oxidative stress and iron limitation. Acts as a potent selenocysteine lyase in vitro, that mobilizes selenium from L-selenocysteine. Selenocysteine lyase activity is however unsure in vivo. The polypeptide is Cysteine desulfurase (Serratia proteamaculans (strain 568)).